Here is a 905-residue protein sequence, read N- to C-terminus: Cation-transporting ATPase pma1 (905 aa).

4 consecutive transmembrane segments (helical) span residues 60–80, 81–101, 248–268, and 283–303; these read FLLQ…TVKA, FLGS…NAII, FSHT…AVGW, and ALAV…TLAI. Asp333 (4-aspartylphosphate intermediate) is an active-site residue. Helical transmembrane passes span 716–736, 774–794, 809–829, 848–868, and 880–900; these read ILIS…VLWL, LLHR…GMFE, MAIQ…SQLG, ILLL…QLPF, and WQQW…AILA.

Belongs to the cation transport ATPase (P-type) (TC 3.A.3) family. Type IIA subfamily.

It is found in the cell membrane. The enzyme catalyses ATP + H2O = ADP + phosphate + H(+). Could mediate calcium influx. This chain is Cation-transporting ATPase pma1 (pma1), found in Synechocystis sp. (strain ATCC 27184 / PCC 6803 / Kazusa).